Consider the following 199-residue polypeptide: Probable thymidylate kinase (199 aa).

9-16 (GIDGCGKT) contacts ATP.

Belongs to the thymidylate kinase family.

The enzyme catalyses dTMP + ATP = dTDP + ADP. In Methanococcus maripaludis (strain DSM 14266 / JCM 13030 / NBRC 101832 / S2 / LL), this protein is Probable thymidylate kinase.